Here is a 119-residue protein sequence, read N- to C-terminus: Large ribosomal subunit protein uL18 (119 aa).

Belongs to the universal ribosomal protein uL18 family. Part of the 50S ribosomal subunit; part of the 5S rRNA/L5/L18/L25 subcomplex. Contacts the 5S and 23S rRNAs.

This is one of the proteins that bind and probably mediate the attachment of the 5S RNA into the large ribosomal subunit, where it forms part of the central protuberance. This chain is Large ribosomal subunit protein uL18, found in Clostridium perfringens (strain 13 / Type A).